Consider the following 287-residue polypeptide: 2-dehydro-3-deoxyphosphooctonate aldolase (287 aa).

This sequence belongs to the KdsA family.

It localises to the cytoplasm. It carries out the reaction D-arabinose 5-phosphate + phosphoenolpyruvate + H2O = 3-deoxy-alpha-D-manno-2-octulosonate-8-phosphate + phosphate. It participates in carbohydrate biosynthesis; 3-deoxy-D-manno-octulosonate biosynthesis; 3-deoxy-D-manno-octulosonate from D-ribulose 5-phosphate: step 2/3. The protein operates within bacterial outer membrane biogenesis; lipopolysaccharide biosynthesis. The sequence is that of 2-dehydro-3-deoxyphosphooctonate aldolase from Magnetococcus marinus (strain ATCC BAA-1437 / JCM 17883 / MC-1).